Reading from the N-terminus, the 87-residue chain is Serine protease inhibitor Kazal-type 12 (87 aa).

The first 22 residues, 1–22 (MKPAGAFLLLISLACLFLSVDA), serve as a signal peptide directing secretion. In terms of domain architecture, Kazal-like spans 26–87 (GGFQAFCSNY…KLGFKHEGKC (62 aa)). Intrachain disulfides connect Cys-32–Cys-68, Cys-46–Cys-65, and Cys-54–Cys-87.

As to expression, expressed in epydiymis, in the caput.

The protein localises to the secreted. Its function is as follows. Inhibits trypsin. The sequence is that of Serine protease inhibitor Kazal-type 12 (Spink12) from Mus musculus (Mouse).